We begin with the raw amino-acid sequence, 347 residues long: Heat-inducible transcription repressor HrcA (347 aa).

The protein belongs to the HrcA family.

Its function is as follows. Negative regulator of class I heat shock genes (grpE-dnaK-dnaJ and groELS operons). Prevents heat-shock induction of these operons. The chain is Heat-inducible transcription repressor HrcA from Enterococcus faecalis (strain ATCC 700802 / V583).